The sequence spans 155 residues: Peptide methionine sulfoxide reductase MsrB (155 aa).

The 123-residue stretch at 15-137 (REALIATLNA…NSVSLTFIPT (123 aa)) folds into the MsrB domain. Cysteine 54, cysteine 57, cysteine 103, and cysteine 106 together coordinate Zn(2+). The active-site Nucleophile is cysteine 126.

The protein belongs to the MsrB Met sulfoxide reductase family. The cofactor is Zn(2+).

The enzyme catalyses L-methionyl-[protein] + [thioredoxin]-disulfide + H2O = L-methionyl-(R)-S-oxide-[protein] + [thioredoxin]-dithiol. This is Peptide methionine sulfoxide reductase MsrB from Xylella fastidiosa (strain M23).